Reading from the N-terminus, the 304-residue chain is Recombination-associated protein RdgC (304 aa).

The protein belongs to the RdgC family.

Its subcellular location is the cytoplasm. The protein localises to the nucleoid. Functionally, may be involved in recombination. The sequence is that of Recombination-associated protein RdgC from Shewanella sp. (strain MR-4).